Reading from the N-terminus, the 624-residue chain is Kelch-like ECH-associated protein 1 (624 aa).

Cys38 is subject to S-(2-succinyl)cysteine. The BTB domain occupies 77 to 149; that stretch reads CDVTLQVKYQ…AYTASISMGE (73 aa). Arg135 is covalently cross-linked (N5-[4-(S-L-cysteinyl)-5-methyl-1H-imidazol-2-yl]-L-ornithine (Arg-Cys) (interchain with C-151 in KEAP1)). An S-(2-succinyl)cysteine mark is found at Cys151 and Cys241. Cys151 carries the S-(2,3-dicarboxypropyl)cysteine; alternate modification. Cys151 bears the S-nitrosocysteine; alternate mark. Cys151 is covalently cross-linked (N5-[4-(S-L-cysteinyl)-5-methyl-1H-imidazol-2-yl]-L-ornithine (Cys-Arg) (interchain with R-135 in KEAP1)). Residues 184-286 form the BACK domain; that stretch reads AIGIANFAEQ…TPNFLQMQLQ (103 aa). 2 positions are modified to S-(2,3-dicarboxypropyl)cysteine: Cys257 and Cys273. An S-(2-succinyl)cysteine mark is found at Cys288 and Cys319. Cys288 carries the S-(2,3-dicarboxypropyl)cysteine; alternate modification. Kelch repeat units follow at residues 327–372, 373–423, 424–470, 471–517, 518–564, and 565–611; these read LIYT…VVGG, LLYA…VIDG, HIYA…VLNR, LLYA…VLHN, CIYA…VHQG, and RIYV…VTME. Cys434 is modified (S-cGMP-cysteine). Cys613 carries the S-(2-succinyl)cysteine modification.

It belongs to the KEAP1 family. Component of the BCR(KEAP1) E3 ubiquitin ligase complex, at least composed of 2 molecules of CUL3, 2 molecules of KEAP1, and RBX1. Interacts with NFE2L2/NRF2; the interaction is direct. Forms a ternary complex with NFE2L2/NRF2 and PGAM5. Interacts with (phosphorylated) SQSTM1/p62; the interaction is direct and inactivates the BCR(KEAP1) complex by sequestering it in inclusion bodies, promoting its degradation. Interacts with NFE2L1. Interacts with BPTF and PTMA. Interacts with MAP1LC3B. Interacts indirectly with ENC1. Interacts with SESN1 and SESN2. Interacts with HSP90AA1 and HSP90AB1. Interacts with PGCKA1; this interaction prevents the ubiquitination of KEAP1 by TRIM25, thus protecting KEAP1 from degradation. Post-translationally, non-enzymatic covalent modifications of reactive cysteines by electrophile metabolites inactivate the BCR(KEAP1) complex. Accumulation of fumarate promotes the formation of cysteine S-succination (S-(2-succinyl)cysteine), leading to inactivate the BCR(KEAP1) complex and promote NFE2L2/NRF2 nuclear accumulation and activation. Nitric oxide-dependent 8-Nitro-cGMP formation promotes cysteine guanylation (S-cGMP-cysteine), leading to NFE2L2/NRF2 nuclear accumulation and activation. Itaconate, an anti-inflammatory metabolite generated in response to lipopolysaccharide, alkylates cysteines, activating NFE2L2/NRF2. Methylglyoxal, a reactive metabolite that accumulates when the glycolytic enzyme PGK1 is inhibited, promotes formation of a methylimidazole cross-link between proximal Cys-151 and Arg-135 on another KEAP1 molecule, resulting in an inactive dimer that inactivates the BCR(KEAP1) complex. In terms of processing, degraded via a proteasomal-independent process during selective autophagy: interaction with phosphorylated SQSTM1/p62 sequesters KEAP1 in inclusion bodies, leading to its degradation. Auto-ubiquitinated by the BCR(KEAP1) complex. Quinone-induced oxidative stress, but not sulforaphane, increases its ubiquitination. Ubiquitination and subsequent degradation is most pronounced following prolonged exposure of cells to oxidative stress, particularly in glutathione-deficient cells that are highly susceptible to oxidative stress. Deubiquitinated by USP25; leading to stabilization. Ubiquitinated by TRIM25; leading to degradation upon ER stress.

The protein localises to the cytoplasm. The protein resides in the nucleus. It functions in the pathway protein modification; protein ubiquitination. With respect to regulation, ubiquitin ligase activity of the BCR(KEAP1) complex is inhibited by oxidative stress and electrophile metabolites such as sulforaphane. Electrophile metabolites react with reactive cysteine residues in KEAP1 and trigger non-enzymatic covalent modifications of these cysteine residues, leading to inactivate the ubiquitin ligase activity of the BCR(KEAP1) complex. Selective autophagy also inactivates the BCR(KEAP1) complex via interaction between KEAP1 and SQSTM1/p62, which sequesters the complex in inclusion bodies and promotes its degradation. Its function is as follows. Substrate-specific adapter of a BCR (BTB-CUL3-RBX1) E3 ubiquitin ligase complex that regulates the response to oxidative stress by targeting NFE2L2/NRF2 for ubiquitination. KEAP1 acts as a key sensor of oxidative and electrophilic stress: in normal conditions, the BCR(KEAP1) complex mediates ubiquitination and degradation of NFE2L2/NRF2, a transcription factor regulating expression of many cytoprotective genes. In response to oxidative stress, different electrophile metabolites trigger non-enzymatic covalent modifications of highly reactive cysteine residues in KEAP1, leading to inactivate the ubiquitin ligase activity of the BCR(KEAP1) complex, promoting NFE2L2/NRF2 nuclear accumulation and expression of phase II detoxifying enzymes. In response to selective autophagy, KEAP1 is sequestered in inclusion bodies following its interaction with SQSTM1/p62, leading to inactivation of the BCR(KEAP1) complex and activation of NFE2L2/NRF2. The BCR(KEAP1) complex also mediates ubiquitination of SQSTM1/p62, increasing SQSTM1/p62 sequestering activity and degradation. The BCR(KEAP1) complex also targets BPTF and PGAM5 for ubiquitination and degradation by the proteasome. The protein is Kelch-like ECH-associated protein 1 of Pongo abelii (Sumatran orangutan).